The chain runs to 253 residues: DNA repair protein RecO (253 aa).

This sequence belongs to the RecO family.

In terms of biological role, involved in DNA repair and RecF pathway recombination. In Streptococcus agalactiae serotype III (strain NEM316), this protein is DNA repair protein RecO.